The primary structure comprises 159 residues: Ribose-5-phosphate isomerase B (159 aa).

D-ribulose 5-phosphate-binding positions include 8–9 and 67–71; these read DH and GSGNG. Catalysis depends on Glu72, which acts as the Proton acceptor. The active-site Proton donor is His99. Residues Asn100, Arg110, Arg134, and Arg138 each coordinate D-ribulose 5-phosphate.

This sequence belongs to the LacAB/RpiB family. As to quaternary structure, homodimer.

It carries out the reaction aldehydo-D-ribose 5-phosphate = D-ribulose 5-phosphate. It functions in the pathway carbohydrate degradation; pentose phosphate pathway; D-ribose 5-phosphate from D-ribulose 5-phosphate (non-oxidative stage): step 1/1. Its function is as follows. Catalyzes the interconversion of ribulose-5-P and ribose-5-P. The protein is Ribose-5-phosphate isomerase B of Mycolicibacterium paratuberculosis (strain ATCC BAA-968 / K-10) (Mycobacterium paratuberculosis).